A 245-amino-acid polypeptide reads, in one-letter code: 1-(5-phosphoribosyl)-5-[(5-phosphoribosylamino)methylideneamino] imidazole-4-carboxamide isomerase (245 aa).

D8 (proton acceptor) is an active-site residue. The active-site Proton donor is the D130.

Belongs to the HisA/HisF family.

The protein resides in the cytoplasm. It catalyses the reaction 1-(5-phospho-beta-D-ribosyl)-5-[(5-phospho-beta-D-ribosylamino)methylideneamino]imidazole-4-carboxamide = 5-[(5-phospho-1-deoxy-D-ribulos-1-ylimino)methylamino]-1-(5-phospho-beta-D-ribosyl)imidazole-4-carboxamide. Its pathway is amino-acid biosynthesis; L-histidine biosynthesis; L-histidine from 5-phospho-alpha-D-ribose 1-diphosphate: step 4/9. This Ectopseudomonas mendocina (strain ymp) (Pseudomonas mendocina) protein is 1-(5-phosphoribosyl)-5-[(5-phosphoribosylamino)methylideneamino] imidazole-4-carboxamide isomerase.